The chain runs to 424 residues: Enolase (424 aa).

A (2R)-2-phosphoglycerate-binding site is contributed by Gln164. Glu206 acts as the Proton donor in catalysis. 3 residues coordinate Mg(2+): Asp243, Glu284, and Asp311. (2R)-2-phosphoglycerate is bound by residues Lys336, Arg365, Ser366, and Lys387. Lys336 acts as the Proton acceptor in catalysis.

The protein belongs to the enolase family. Mg(2+) serves as cofactor.

The protein resides in the cytoplasm. It is found in the secreted. The protein localises to the cell surface. The enzyme catalyses (2R)-2-phosphoglycerate = phosphoenolpyruvate + H2O. The protein operates within carbohydrate degradation; glycolysis; pyruvate from D-glyceraldehyde 3-phosphate: step 4/5. Functionally, catalyzes the reversible conversion of 2-phosphoglycerate (2-PG) into phosphoenolpyruvate (PEP). It is essential for the degradation of carbohydrates via glycolysis. This Wolbachia sp. subsp. Drosophila simulans (strain wRi) protein is Enolase.